Consider the following 351-residue polypeptide: F-box protein At1g47810 (351 aa).

The F-box domain occupies 8–54; it reads LQSLDPIPVDVLFEIFLNLPAKFLARFVCVSKLWAKIIRNQDFIRSF.

The chain is F-box protein At1g47810 from Arabidopsis thaliana (Mouse-ear cress).